Consider the following 213-residue polypeptide: Thymidylate kinase (213 aa).

10–17 lines the ATP pocket; the sequence is GLEGAGKT.

It belongs to the thymidylate kinase family.

The catalysed reaction is dTMP + ATP = dTDP + ADP. Functionally, phosphorylation of dTMP to form dTDP in both de novo and salvage pathways of dTTP synthesis. In Escherichia coli O6:H1 (strain CFT073 / ATCC 700928 / UPEC), this protein is Thymidylate kinase.